The chain runs to 118 residues: UPF0342 protein BC_0880 (118 aa).

The protein belongs to the UPF0342 family.

This is UPF0342 protein BC_0880 from Bacillus cereus (strain ATCC 14579 / DSM 31 / CCUG 7414 / JCM 2152 / NBRC 15305 / NCIMB 9373 / NCTC 2599 / NRRL B-3711).